Consider the following 224-residue polypeptide: Cytidylate kinase (224 aa).

An ATP-binding site is contributed by 11 to 19 (GPAAAGKST).

The protein belongs to the cytidylate kinase family. Type 1 subfamily.

It is found in the cytoplasm. The enzyme catalyses CMP + ATP = CDP + ADP. It catalyses the reaction dCMP + ATP = dCDP + ADP. The sequence is that of Cytidylate kinase from Geobacillus kaustophilus (strain HTA426).